Reading from the N-terminus, the 476-residue chain is Splicing factor ESS-2 homolog (476 aa).

M1 is subject to N-acetylmethionine. Over residues 1-18 the composition is skewed to low complexity; the sequence is METPGASASSLLLPAASR. Disordered regions lie at residues 1 to 36 and 91 to 148; these read METP…SKQR and LGKM…LPSL. T3 bears the Phosphothreonine mark. Acidic residues predominate over residues 133-142; sequence DGEAGEEEEK. K142 is covalently cross-linked (Glycyl lysine isopeptide (Lys-Gly) (interchain with G-Cter in SUMO2)). A Phosphoserine modification is found at S292. Position 386 is a phosphothreonine (T386). Phosphoserine occurs at positions 391 and 395. The segment at 413–465 is disordered; it reads ALRASYTPSPARSTHLKTPASGLQTPTSTPAPGSATRTPLTQDPASITDNLLQ. Positions 437–451 are enriched in low complexity; it reads TPTSTPAPGSATRTP. Positions 452–463 are enriched in polar residues; the sequence is LTQDPASITDNL.

It belongs to the ESS2 family. As to quaternary structure, identified in the spliceosome C complex. Interacts with FRA10AC1. In terms of tissue distribution, highly expressed in heart, brain and skeletal muscle. Detected at low levels in placenta.

It is found in the nucleus. Functionally, may be involved in pre-mRNA splicing. This Homo sapiens (Human) protein is Splicing factor ESS-2 homolog.